The chain runs to 142 residues: Protein spalt-accessory (142 aa).

The signal sequence occupies residues 1–16; sequence MKLLIALFALVTAVNA. The tract at residues 75-142 is disordered; sequence GFAGQGSPNQ…HHEHHGHHRH (68 aa). A compositionally biased stretch (basic and acidic residues) spans 107-124; sequence GHFHENPHEYPEHHGDHH. Residues 125–142 show a composition bias toward basic residues; it reads REHHEHHGHHEHHGHHRH.

The protein resides in the secreted. Its function is as follows. Likely to be involved in the establishment of the head. The protein is Protein spalt-accessory (sala) of Drosophila melanogaster (Fruit fly).